We begin with the raw amino-acid sequence, 252 residues long: Aspartate/glutamate leucyltransferase (252 aa).

This sequence belongs to the R-transferase family. Bpt subfamily.

The protein localises to the cytoplasm. The enzyme catalyses N-terminal L-glutamyl-[protein] + L-leucyl-tRNA(Leu) = N-terminal L-leucyl-L-glutamyl-[protein] + tRNA(Leu) + H(+). It catalyses the reaction N-terminal L-aspartyl-[protein] + L-leucyl-tRNA(Leu) = N-terminal L-leucyl-L-aspartyl-[protein] + tRNA(Leu) + H(+). Functionally, functions in the N-end rule pathway of protein degradation where it conjugates Leu from its aminoacyl-tRNA to the N-termini of proteins containing an N-terminal aspartate or glutamate. In Agrobacterium fabrum (strain C58 / ATCC 33970) (Agrobacterium tumefaciens (strain C58)), this protein is Aspartate/glutamate leucyltransferase.